The primary structure comprises 211 residues: MRHYTGIDRLINSFDQALRSLVPGTTAAQRSNPAEQTQAPLTVSDARHVAGLMRVNHSGEVCAQALYHGQALTAKLPNVRLEMEQAAIEEQDHLAWCEDRLKELDSVPSLLNPVWYSLSFGMGAIAGIAGDKYSLGFVAETERQVSSHLQDHLKQLPTHDERSKRILEQMNQDELHHRDTALNAGGVELPVAVKITMTAISKLMTKTSYYI.

Fe cation-binding residues include Glu-60, Glu-90, His-93, Glu-142, Glu-174, and His-177.

Belongs to the COQ7 family. Fe cation is required as a cofactor.

It is found in the cell membrane. The enzyme catalyses a 5-methoxy-2-methyl-3-(all-trans-polyprenyl)benzene-1,4-diol + AH2 + O2 = a 3-demethylubiquinol + A + H2O. It participates in cofactor biosynthesis; ubiquinone biosynthesis. Its function is as follows. Catalyzes the hydroxylation of 2-nonaprenyl-3-methyl-6-methoxy-1,4-benzoquinol during ubiquinone biosynthesis. This Acinetobacter baylyi (strain ATCC 33305 / BD413 / ADP1) protein is 3-demethoxyubiquinol 3-hydroxylase.